The chain runs to 363 residues: Teichoic acids export ATP-binding protein TagH (363 aa).

An ABC transporter domain is found at 27 to 246 (KHFFNIGNVD…YRKFSKDFKA (220 aa)). 60–67 (GINGSGKS) is an ATP binding site. Residues 247 to 363 (QTAAYRKKYQ…KSQSVLFNSK (117 aa)) are unknown.

Belongs to the ABC transporter superfamily. Teichoic acids exporter (TC 3.A.1.104.1) family. The complex is composed of two ATP-binding proteins (TagH) and two transmembrane proteins (TagG).

It localises to the cell membrane. It catalyses the reaction ATP + H2O + teichoic acidSide 1 = ADP + phosphate + teichoic acidSide 2.. In terms of biological role, part of the ABC transporter complex TagGH involved in teichoic acids export. Responsible for energy coupling to the transport system. This Lactiplantibacillus plantarum (strain ATCC BAA-793 / NCIMB 8826 / WCFS1) (Lactobacillus plantarum) protein is Teichoic acids export ATP-binding protein TagH.